The chain runs to 476 residues: Glycogen synthase (476 aa).

Residue K15 participates in ADP-alpha-D-glucose binding.

It belongs to the glycosyltransferase 1 family. Bacterial/plant glycogen synthase subfamily.

The enzyme catalyses [(1-&gt;4)-alpha-D-glucosyl](n) + ADP-alpha-D-glucose = [(1-&gt;4)-alpha-D-glucosyl](n+1) + ADP + H(+). It participates in glycan biosynthesis; glycogen biosynthesis. In terms of biological role, synthesizes alpha-1,4-glucan chains using ADP-glucose. This chain is Glycogen synthase, found in Yersinia pseudotuberculosis serotype O:1b (strain IP 31758).